Reading from the N-terminus, the 260-residue chain is Ribose-5-phosphate isomerase (260 aa).

The protein belongs to the ribose 5-phosphate isomerase family.

Its subcellular location is the cytoplasm. It catalyses the reaction aldehydo-D-ribose 5-phosphate = D-ribulose 5-phosphate. It participates in carbohydrate degradation; pentose phosphate pathway; D-ribose 5-phosphate from D-ribulose 5-phosphate (non-oxidative stage): step 1/1. This Candida glabrata (strain ATCC 2001 / BCRC 20586 / JCM 3761 / NBRC 0622 / NRRL Y-65 / CBS 138) (Yeast) protein is Ribose-5-phosphate isomerase (RKI1).